We begin with the raw amino-acid sequence, 297 residues long: Glycerol-3-phosphate dehydrogenase [NAD(P)+] (297 aa).

Residues Trp-11, Arg-33, and Lys-79 each coordinate NADPH. Sn-glycerol 3-phosphate contacts are provided by Lys-79, Gly-107, and Ser-109. Residue Ala-111 coordinates NADPH. Residues Lys-161, Asp-214, Ser-224, Arg-225, and Asn-226 each contribute to the sn-glycerol 3-phosphate site. The active-site Proton acceptor is the Lys-161. Arg-225 is a binding site for NADPH. Residues Val-249 and Glu-251 each coordinate NADPH.

Belongs to the NAD-dependent glycerol-3-phosphate dehydrogenase family.

The protein resides in the cytoplasm. The catalysed reaction is sn-glycerol 3-phosphate + NAD(+) = dihydroxyacetone phosphate + NADH + H(+). It carries out the reaction sn-glycerol 3-phosphate + NADP(+) = dihydroxyacetone phosphate + NADPH + H(+). Its pathway is membrane lipid metabolism; glycerophospholipid metabolism. In terms of biological role, catalyzes the reduction of the glycolytic intermediate dihydroxyacetone phosphate (DHAP) to sn-glycerol 3-phosphate (G3P), the key precursor for phospholipid synthesis. The polypeptide is Glycerol-3-phosphate dehydrogenase [NAD(P)+] (Campylobacter jejuni subsp. doylei (strain ATCC BAA-1458 / RM4099 / 269.97)).